Consider the following 317-residue polypeptide: Transaldolase (317 aa).

Catalysis depends on lysine 132, which acts as the Schiff-base intermediate with substrate.

The protein belongs to the transaldolase family. Type 1 subfamily. In terms of assembly, homodimer.

The protein resides in the cytoplasm. It carries out the reaction D-sedoheptulose 7-phosphate + D-glyceraldehyde 3-phosphate = D-erythrose 4-phosphate + beta-D-fructose 6-phosphate. Its pathway is carbohydrate degradation; pentose phosphate pathway; D-glyceraldehyde 3-phosphate and beta-D-fructose 6-phosphate from D-ribose 5-phosphate and D-xylulose 5-phosphate (non-oxidative stage): step 2/3. Transaldolase is important for the balance of metabolites in the pentose-phosphate pathway. In Histophilus somni (strain 129Pt) (Haemophilus somnus), this protein is Transaldolase.